The chain runs to 552 residues: Hyaluronan synthase 2 (552 aa).

Over 1 to 11 (MHCERFLCILR) the chain is Cytoplasmic. A helical membrane pass occupies residues 12 to 32 (IIGTTLFGVSLLLGITAAYIV). Residues 33 to 45 (GYQFIQTDNYYFS) are Extracellular-facing. The helical transmembrane segment at 46–66 (FGLYGAFLASHLIIQSLFAFL) threads the bilayer. Over 67-374 (EHRKMKKSLE…NAMWFHKHHL (308 aa)) the chain is Cytoplasmic. The residue at position 110 (Thr-110) is a Phosphothreonine. Lys-190 participates in a covalent cross-link: Glycyl lysine isopeptide (Lys-Gly) (interchain with G-Cter in ubiquitin). Ser-221 carries O-linked (GlcNAc) serine glycosylation. Thr-328 carries the phosphothreonine modification. The chain crosses the membrane as a helical span at residues 375–395 (WMTYEAVITGFFPFFLIATVI). Residues 396–402 (QLFYRGK) lie on the Extracellular side of the membrane. Residues 403 to 423 (IWNILLFLLTVQLVGLIKSSF) traverse the membrane as a helical segment. The Cytoplasmic portion of the chain corresponds to 424-429 (ASCLRG). A helical membrane pass occupies residues 430 to 450 (NIVMVFMSLYSVLYMSSLLPA). Residues 451 to 475 (KMFAIATINKAGWGTSGRKTIVVNF) lie on the Extracellular side of the membrane. The chain crosses the membrane as a helical span at residues 476-496 (IGLIPVSVWFTILLGGVIFTI). Residues 497-510 (YKESKKPFSESKQT) lie on the Cytoplasmic side of the membrane. The helical transmembrane segment at 511-531 (VLIVGTLLYACYWVMLLTLYV) threads the bilayer. Topologically, residues 532–552 (VLINKCGRRKKGQQYDMVLDV) are extracellular.

Belongs to the NodC/HAS family. Homodimer; dimerization promotes enzymatic activity. Forms heterodimer with HAS3. Forms heterodimer with HAS1. Requires Mg(2+) as cofactor. Post-translationally, phosphorylation at Thr-328 is essential for hyaluronan synthase activity. In terms of processing, O-GlcNAcylation at Ser-221 increases the stability of HAS2 and plasma membrane localization. Ubiquitination at Lys-190; this ubiquitination is essential for hyaluronan synthase activity and homo- or hetero-oligomerization. Can also be poly-ubiquitinated. Deubiquitinated by USP17L22/USP17 and USP4. USP17L22/USP17 efficiently removes 'Lys-63'- and 'Lys-48'-linked polyubiquitin chains, whereas USP4 preferentially removes monoubiquitination and, partially, both 'Lys-63'- and 'Lys-48'-linked polyubiquitin chain. As to expression, overexpressed in skin fibroblasts.

It localises to the cell membrane. Its subcellular location is the endoplasmic reticulum membrane. The protein resides in the vesicle. It is found in the golgi apparatus membrane. The protein localises to the lysosome. The catalysed reaction is [hyaluronan](n) + UDP-N-acetyl-alpha-D-glucosamine = N-acetyl-beta-D-glucosaminyl-(1-&gt;4)-[hyaluronan](n) + UDP + H(+). It catalyses the reaction N-acetyl-beta-D-glucosaminyl-(1-&gt;4)-[hyaluronan](n) + UDP-alpha-D-glucuronate = [hyaluronan](n+1) + UDP + H(+). It functions in the pathway glycan biosynthesis; hyaluronan biosynthesis. Its function is as follows. Catalyzes the addition of GlcNAc or GlcUA monosaccharides to the nascent hyaluronan polymer. Therefore, it is essential to hyaluronan synthesis a major component of most extracellular matrices that has a structural role in tissues architectures and regulates cell adhesion, migration and differentiation. This is one of three isoenzymes responsible for cellular hyaluronan synthesis and it is particularly responsible for the synthesis of high molecular mass hyaluronan. In Heterocephalus glaber (Naked mole rat), this protein is Hyaluronan synthase 2 (Has2).